We begin with the raw amino-acid sequence, 300 residues long: UDP-3-O-acyl-N-acetylglucosamine deacetylase (300 aa).

Residues H78, H237, and D241 each contribute to the Zn(2+) site. The Proton donor role is filled by H264.

This sequence belongs to the LpxC family. Zn(2+) serves as cofactor.

It carries out the reaction a UDP-3-O-[(3R)-3-hydroxyacyl]-N-acetyl-alpha-D-glucosamine + H2O = a UDP-3-O-[(3R)-3-hydroxyacyl]-alpha-D-glucosamine + acetate. Its pathway is glycolipid biosynthesis; lipid IV(A) biosynthesis; lipid IV(A) from (3R)-3-hydroxytetradecanoyl-[acyl-carrier-protein] and UDP-N-acetyl-alpha-D-glucosamine: step 2/6. Catalyzes the hydrolysis of UDP-3-O-myristoyl-N-acetylglucosamine to form UDP-3-O-myristoylglucosamine and acetate, the committed step in lipid A biosynthesis. The polypeptide is UDP-3-O-acyl-N-acetylglucosamine deacetylase (Acinetobacter baumannii (strain SDF)).